Here is a 488-residue protein sequence, read N- to C-terminus: MSFKDLRSFIDHLEANGELKRISYPVDPHLEMTEIADRVLRAQGPALLFENPTNHSMPVLANLFGTPKRVAMALGKDDPLALREVGELLAFLKEPEPPRGFKDAISKIPMFKQALNMPPKTVRNPACQQVVKTGDDVDLTQLPIQHCWPGDVAPLVTWGLTITKGPRKSRQNLGIYRQQLLGKNKLIMRWLSHRGGALDFADFKEQFPGERYPVVVALGSDPVTILGAVTPVPDAMSEYAFAGLLRGERTEVCKALSCDLEVPASSEIILEGYIDPNEMAEEGPYGDHTGYYNETDKFPVFTVTHITHRKDPIYHSTYTGRPPDEPAMLGVALNEVFVPILRKQYPEIIDFYLPPEGCSYRMAVISIRKQYPGHAKRVMMGAWSFLRQFMYTKFIVVVDDDVNCRDWNDVIWAITTRMDPKRDTVMIDNTPIDYLDFASPVVGLGSKMGLDATNKWEGETNREWGTPIVMDPKVKQKIDSIWDELGIS.

Asparagine 172 contributes to the Mn(2+) binding site. Prenylated FMN is bound by residues 175 to 177, 189 to 191, and 194 to 195; these read IYR, RWL, and RG. Glutamate 238 provides a ligand contact to Mn(2+). Catalysis depends on aspartate 287, which acts as the Proton donor.

The protein belongs to the UbiD family. Homohexamer. Prenylated FMN is required as a cofactor. Requires Mn(2+) as cofactor.

Its subcellular location is the cell membrane. The catalysed reaction is a 4-hydroxy-3-(all-trans-polyprenyl)benzoate + H(+) = a 2-(all-trans-polyprenyl)phenol + CO2. The protein operates within cofactor biosynthesis; ubiquinone biosynthesis. Catalyzes the decarboxylation of 3-octaprenyl-4-hydroxy benzoate to 2-octaprenylphenol, an intermediate step in ubiquinone biosynthesis. This chain is 3-octaprenyl-4-hydroxybenzoate carboxy-lyase, found in Shewanella oneidensis (strain ATCC 700550 / JCM 31522 / CIP 106686 / LMG 19005 / NCIMB 14063 / MR-1).